The sequence spans 634 residues: Chaperone protein HtpG (634 aa).

The tract at residues 1 to 342 (MTVDTDKQTL…SSDLSLNVSR (342 aa)) is a; substrate-binding. The tract at residues 343-559 (EILQSGPVVD…QGDLGLQMRQ (217 aa)) is b. Residues 560-634 (LLEASGQAVP…LNKLLLELSV (75 aa)) are c.

It belongs to the heat shock protein 90 family. In terms of assembly, homodimer.

It localises to the cytoplasm. Molecular chaperone. Has ATPase activity. This is Chaperone protein HtpG from Xanthomonas oryzae pv. oryzae (strain MAFF 311018).